The following is a 397-amino-acid chain: Tyrosine--tRNA ligase (397 aa).

Residues proline 41 to histidine 50 carry the 'HIGH' region motif. The 'KMSKS' region motif lies at lysine 225–serine 229. Residue lysine 228 participates in ATP binding. One can recognise an S4 RNA-binding domain in the interval alanine 340 to valine 396.

This sequence belongs to the class-I aminoacyl-tRNA synthetase family. TyrS type 2 subfamily. Homodimer.

It localises to the cytoplasm. The catalysed reaction is tRNA(Tyr) + L-tyrosine + ATP = L-tyrosyl-tRNA(Tyr) + AMP + diphosphate + H(+). In terms of biological role, catalyzes the attachment of tyrosine to tRNA(Tyr) in a two-step reaction: tyrosine is first activated by ATP to form Tyr-AMP and then transferred to the acceptor end of tRNA(Tyr). This is Tyrosine--tRNA ligase from Oleidesulfovibrio alaskensis (strain ATCC BAA-1058 / DSM 17464 / G20) (Desulfovibrio alaskensis).